Consider the following 736-residue polypeptide: Gingipain R2 (736 aa).

The N-terminal stretch at 1–24 (MKKNFSRIVSIVAFSSLLGGMAFA) is a signal peptide. Positions 25–229 (QPAERGRNPQ…SVFMNYEATR (205 aa)) are excised as a propeptide. Residues D307, V329, D332, Y334, E336, E390, and H395 each coordinate Ca(2+). The Proton donor role is filled by H440. C473 acts as the Nucleophile in catalysis. Ca(2+) is bound by residues F478, E487, D521, E522, E525, H531, D613, and E639.

The protein belongs to the peptidase C25 family.

Its subcellular location is the secreted. It catalyses the reaction Hydrolysis of proteins and small molecule substrates, with a preference for Arg in P1.. Its function is as follows. Thiol protease. Acts synergistically with RgpA to catalyze the maturation of fimbrial subunits, such as FimA. Its proteolytic activity is a major factor in both periodontal tissue destruction and in evasion of host defense mechanisms. This Porphyromonas gingivalis (strain ATCC 33277 / DSM 20709 / CIP 103683 / JCM 12257 / NCTC 11834 / 2561) protein is Gingipain R2.